A 368-amino-acid polypeptide reads, in one-letter code: Cytochrome-c peroxidase IdrP2 (368 aa).

The N-terminal stretch at 1 to 27 (MKWHRGRLTQTLGAMGLTATLTVAAQA) is a signal peptide. Cytochrome c domains are found at residues 48–158 (AMIE…ALWQ) and 201–346 (KEAQ…LTLS). Cys70, Cys73, His74, Cys216, Cys219, and His220 together coordinate heme c.

The iodate reductase (Idr) complex is composed of a molybdopterin-dependent iodate reductase (IdrA and IdrB subunits) and two associated peroxidases (IdrP1 and IdrP2). Requires heme c as cofactor.

It localises to the periplasm. The enzyme catalyses 2 Fe(II)-[cytochrome c] + H2O2 + 2 H(+) = 2 Fe(III)-[cytochrome c] + 2 H2O. Functionally, involved in iodate respiration. Probably reduces the H(2)O(2) produced by IdrA/IdrB to H(2)O, using a reduced cytochrome c as the electron donor. The polypeptide is Cytochrome-c peroxidase IdrP2 (Pseudomonas sp. (strain SCT)).